The chain runs to 188 residues: Large ribosomal subunit protein bL35m (188 aa).

The protein belongs to the bacterial ribosomal protein bL35 family.

The protein resides in the mitochondrion. The polypeptide is Large ribosomal subunit protein bL35m (Mrpl35) (Mus musculus (Mouse)).